Here is a 461-residue protein sequence, read N- to C-terminus: Ribosomal protein uS12 methylthiotransferase RimO (461 aa).

The 116-residue stretch at 13–128 (PKVGFVSLGC…VMQHVHTHLP (116 aa)) folds into the MTTase N-terminal domain. [4Fe-4S] cluster is bound by residues Cys-22, Cys-58, Cys-87, Cys-159, Cys-163, and Cys-166. The Radical SAM core domain maps to 145–390 (LTPRHYAYLK…MEVAEEVSAK (246 aa)). Positions 393–461 (AKKVGKTLKV…ADGHDLWGEV (69 aa)) constitute a TRAM domain.

This sequence belongs to the methylthiotransferase family. RimO subfamily. Requires [4Fe-4S] cluster as cofactor.

The protein resides in the cytoplasm. The enzyme catalyses L-aspartate(89)-[ribosomal protein uS12]-hydrogen + (sulfur carrier)-SH + AH2 + 2 S-adenosyl-L-methionine = 3-methylsulfanyl-L-aspartate(89)-[ribosomal protein uS12]-hydrogen + (sulfur carrier)-H + 5'-deoxyadenosine + L-methionine + A + S-adenosyl-L-homocysteine + 2 H(+). Its function is as follows. Catalyzes the methylthiolation of an aspartic acid residue of ribosomal protein uS12. The sequence is that of Ribosomal protein uS12 methylthiotransferase RimO from Paraburkholderia phytofirmans (strain DSM 17436 / LMG 22146 / PsJN) (Burkholderia phytofirmans).